The following is a 754-amino-acid chain: Nitrate reductase (754 aa).

Residues 1–31 (MKFTRRSFVKASALATAMVAAGCSPQPVAPK) constitute a signal peptide (tat-type signal). Residues 39-95 (ATWYKTVCRYCGVGCGVMVAAKDNRVVAVKGDTENPVNKGLLCVKGYYLDRIMNTEE) form the 4Fe-4S Mo/W bis-MGD-type domain. 4 residues coordinate [4Fe-4S] cluster: cysteine 46, cysteine 49, cysteine 53, and cysteine 81. Mo-bis(molybdopterin guanine dinucleotide) contacts are provided by residues lysine 83, glutamine 144, asparagine 169, cysteine 173, 256–258 (GTD), methionine 341, glutamine 345, asparagine 451, lysine 497, aspartate 524, 642–651 (TGRILEHWHT), asparagine 728, and lysine 745.

It belongs to the prokaryotic molybdopterin-containing oxidoreductase family. NasA/NapA/NarB subfamily. Component of the nitrate reductase NapAB complex composed of NapA and NapB. [4Fe-4S] cluster serves as cofactor. It depends on Mo-bis(molybdopterin guanine dinucleotide) as a cofactor. Predicted to be exported by the Tat system. The position of the signal peptide cleavage has not been experimentally proven.

It localises to the secreted. It catalyses the reaction 2 Fe(II)-[cytochrome] + nitrate + 2 H(+) = 2 Fe(III)-[cytochrome] + nitrite + H2O. Its function is as follows. Catalytic subunit of the nitrate reductase complex NapAB. Receives electrons from NapB and catalyzes the reduction of nitrate to nitrite. The polypeptide is Nitrate reductase (Symbiobacterium thermophilum (strain DSM 24528 / JCM 14929 / IAM 14863 / T)).